We begin with the raw amino-acid sequence, 776 residues long: Endonuclease MutS2 (776 aa).

ATP is bound at residue 330–337; it reads GPNTGGKT. The region spanning 701-776 is the Smr domain; sequence LDLRGMRYEE…GSGATIAILK (76 aa).

The protein belongs to the DNA mismatch repair MutS family. MutS2 subfamily. In terms of assembly, homodimer. Binds to stalled ribosomes, contacting rRNA.

In terms of biological role, endonuclease that is involved in the suppression of homologous recombination and thus may have a key role in the control of bacterial genetic diversity. Functionally, acts as a ribosome collision sensor, splitting the ribosome into its 2 subunits. Detects stalled/collided 70S ribosomes which it binds and splits by an ATP-hydrolysis driven conformational change. Acts upstream of the ribosome quality control system (RQC), a ribosome-associated complex that mediates the extraction of incompletely synthesized nascent chains from stalled ribosomes and their subsequent degradation. Probably generates substrates for RQC. The sequence is that of Endonuclease MutS2 from Lactococcus lactis subsp. cremoris (strain MG1363).